We begin with the raw amino-acid sequence, 432 residues long: Cyclic GMP-AMP synthase-like receptor (432 aa).

ATP-binding positions include Ser-59 and 71-73 (EFD). Glu-71, Asp-73, and Asp-205 together coordinate Mg(2+). Residues Asp-205 and 255–262 (KQTCSVLE) each bind GTP. Residues 259–262 (SVLE), Lys-284, and 303–307 (TYALK) each bind ATP.

Belongs to the mab-21 family. Mg(2+) serves as cofactor. It depends on Mn(2+) as a cofactor.

The catalysed reaction is GTP + ATP = 2',3'-cGAMP + 2 diphosphate. The enzyme catalyses GTP + ATP = pppGp(2'-5')A + diphosphate. It catalyses the reaction pppGp(2'-5')A = 2',3'-cGAMP + diphosphate. Functionally, nucleotidyltransferase that catalyzes the formation of cyclic GMP-AMP (2',3'-cGAMP) from ATP and GTP and plays a key role in innate immunity. Directly binds some unknown ligand, activating the nucleotidyltransferase activity, leading to synthesis of 2',3'-cGAMP, a second messenger that binds to and activates Sting, thereby triggering the immune response via activation of the NF-kappa-B transcription factor. This Pocillopora damicornis (Cauliflower coral) protein is Cyclic GMP-AMP synthase-like receptor.